A 414-amino-acid polypeptide reads, in one-letter code: uncharacterized protein (414 aa).

The helical transmembrane segment at T367–V384 threads the bilayer.

The protein localises to the virion membrane. This is an uncharacterized protein from Human cytomegalovirus (strain Merlin) (HHV-5).